The sequence spans 37 residues: Large ribosomal subunit protein bL36 (37 aa).

The protein belongs to the bacterial ribosomal protein bL36 family.

In Staphylococcus carnosus (strain TM300), this protein is Large ribosomal subunit protein bL36.